The chain runs to 520 residues: Ribonuclease Y (520 aa).

Residues 4 to 24 form a helical membrane-spanning segment; sequence TVWILISILLATVGAVVGFFV. Positions 86 to 116 are disordered; it reads KQENRLMQKEENLDRKDETLDKREQQLEKKE. The KH domain occupies 210–273; sequence TVSVVNLPND…ETARIALDKL (64 aa). Residues 336–429 enclose the HD domain; the sequence is VLKHSMEVAY…VAAADALSAA (94 aa).

Belongs to the RNase Y family.

Its subcellular location is the cell membrane. Endoribonuclease that initiates mRNA decay. In Bacillus cereus (strain ATCC 10987 / NRS 248), this protein is Ribonuclease Y.